The following is a 430-amino-acid chain: Adenylosuccinate synthetase (430 aa).

Residues 12–18 and 40–42 each bind GTP; these read GDEGKGK and GHT. D13 acts as the Proton acceptor in catalysis. Residues D13 and G40 each contribute to the Mg(2+) site. Residues 13–16, 38–41, T130, R144, Q224, T239, and R303 each bind IMP; these read DEGK and NAGH. The active-site Proton donor is H41. A substrate-binding site is contributed by 299–305; it reads TVTGRKR. Residues R305, 331 to 333, and 413 to 415 contribute to the GTP site; these read KLD and STS.

Belongs to the adenylosuccinate synthetase family. Homodimer. The cofactor is Mg(2+).

The protein resides in the cytoplasm. It carries out the reaction IMP + L-aspartate + GTP = N(6)-(1,2-dicarboxyethyl)-AMP + GDP + phosphate + 2 H(+). Its pathway is purine metabolism; AMP biosynthesis via de novo pathway; AMP from IMP: step 1/2. Its function is as follows. Plays an important role in the de novo pathway of purine nucleotide biosynthesis. Catalyzes the first committed step in the biosynthesis of AMP from IMP. In Parvibaculum lavamentivorans (strain DS-1 / DSM 13023 / NCIMB 13966), this protein is Adenylosuccinate synthetase.